The primary structure comprises 341 residues: Methionine import ATP-binding protein MetN 3 (341 aa).

An ABC transporter domain is found at Ile2 to Val241. Gly38 to Ser45 is a binding site for ATP.

It belongs to the ABC transporter superfamily. Methionine importer (TC 3.A.1.24) family. In terms of assembly, the complex is composed of two ATP-binding proteins (MetN), two transmembrane proteins (MetI) and a solute-binding protein (MetQ).

It localises to the cell membrane. The catalysed reaction is L-methionine(out) + ATP + H2O = L-methionine(in) + ADP + phosphate + H(+). It catalyses the reaction D-methionine(out) + ATP + H2O = D-methionine(in) + ADP + phosphate + H(+). In terms of biological role, part of the ABC transporter complex MetNIQ involved in methionine import. Responsible for energy coupling to the transport system. The sequence is that of Methionine import ATP-binding protein MetN 3 from Bacillus cereus (strain ZK / E33L).